Here is a 92-residue protein sequence, read N- to C-terminus: Putative defensin-like protein 225 (92 aa).

Residues 1-26 (MKYGVLFMVSCGVMFLILSHVEEVEA) form the signal peptide. 3 disulfides stabilise this stretch: cysteine 32-cysteine 92, cysteine 42-cysteine 70, and cysteine 68-cysteine 88.

Belongs to the DEFL family.

The protein resides in the secreted. The protein is Putative defensin-like protein 225 (SCRL1) of Arabidopsis thaliana (Mouse-ear cress).